The primary structure comprises 119 residues: Flagellar transcriptional regulator FlhD (119 aa).

Belongs to the FlhD family. As to quaternary structure, homodimer; disulfide-linked. Forms a heterohexamer composed of two FlhC and four FlhD subunits. Each FlhC binds a FlhD dimer, forming a heterotrimer, and a hexamer assembles by dimerization of two heterotrimers.

The protein localises to the cytoplasm. Functionally, functions in complex with FlhC as a master transcriptional regulator that regulates transcription of several flagellar and non-flagellar operons by binding to their promoter region. Activates expression of class 2 flagellar genes, including fliA, which is a flagellum-specific sigma factor that turns on the class 3 genes. Also regulates genes whose products function in a variety of physiological pathways. The chain is Flagellar transcriptional regulator FlhD from Yersinia enterocolitica.